The primary structure comprises 339 residues: Annexin A2 (339 aa).

An N-acetylserine modification is found at serine 2. The S100A10-binding site stretch occupies residues 2–24 (STVHEILCKLSLEGDHSTPPSAY). Residue tyrosine 24 is modified to Phosphotyrosine; by SRC. A Phosphoserine; by PKC modification is found at serine 26. 2 Annexin repeats span residues 33-104 (FDAE…GLLK) and 105-176 (TPAQ…ALAK). Lysine 49 bears the N6-acetyllysine; alternate mark. A Glycyl lysine isopeptide (Lys-Gly) (interchain with G-Cter in SUMO1); alternate cross-link involves residue lysine 49. Lysine 49 is covalently cross-linked (Glycyl lysine isopeptide (Lys-Gly) (interchain with G-Cter in SUMO2); alternate). An N6-acetyllysine modification is found at lysine 152. The residue at position 184 (serine 184) is a Phosphoserine. Annexin repeat units lie at residues 189–261 (ELID…NLVQ) and 265–336 (NKPL…YLCG). Phosphotyrosine is present on tyrosine 199. An N6-acetyllysine modification is found at lysine 227.

Belongs to the annexin family. Heterotetramer containing 2 light chains of S100A10/p11 and 2 heavy chains of ANXA2/p36. Interacts with ATP1B1. Interacts with DYSF. Interacts with COCH. Interacts (via repeat Annexin 1) with PCSK9 (via the C-terminal domain); the interaction inhibits the degradation of LDLR. Interacts with CEACAM1 (via the cytoplasmic domain); this interaction is regulated by phosphorylation of CEACAM1. Interacts with APPL2 and APPL1; targets APPL2 to endosomes and acting in parallel to RAB5A. Interacts with S100A4. May interact with UBAP2. Interacts with PLEKHG4B; this interaction is required for PLEKHG4B localization to cell-cell adhesions. In terms of processing, ISGylated.

The protein resides in the secreted. It localises to the extracellular space. The protein localises to the extracellular matrix. Its subcellular location is the basement membrane. It is found in the melanosome. Functionally, calcium-regulated membrane-binding protein whose affinity for calcium is greatly enhanced by anionic phospholipids. It binds two calcium ions with high affinity. May be involved in heat-stress response. Inhibits PCSK9-enhanced LDLR degradation, probably reduces PCSK9 protein levels via a translational mechanism but also competes with LDLR for binding with PCSK9. Binds to endosomes damaged by phagocytosis of particulate wear debris and participates in endosomal membrane stabilization, thereby limiting NLRP3 inflammasome activation. Required for endothelial cell surface plasmin generation and may support fibrinolytic surveillance and neoangiogenesis. The polypeptide is Annexin A2 (ANXA2) (Bos taurus (Bovine)).